The chain runs to 380 residues: MGLPKSFVSMSLLFFSTLLILSLAFNAKNLTQRTNDEVKAMYESWLIKYGKSYNSLGEWERRFEIFKETLRFIDEHNADTNRSYKVGLNQFADLTDEEFRSTYLGFTSGSNKTKVSNQYEPRVGQVLPSYVDWRSAGAVVDIKSQGECGGCWAFSAIATVEGINKIVTGVLISLSEQELIDCGRTQNTRGCNVGYITDGFQFIINNGGINTEENYPYTAQDGECNVDLQNEKYVTIDTYENVPYNNEWALQTAVTYQPVSVALDAAGDAFKHYSSGIFIGPCGTAIDHAVTIVGYGTEGGIDYWIVKNSWDTTWGEEGYMRILRNVGGAGTCGIATMPSYPVKYNNQNHPKSYSSLINPPAFSMSNDGPVGVDDGQRYSA.

A signal peptide spans Met1–Ala24. Positions Phe25–Val126 are cleaved as a propeptide — activation peptide. 3 disulfide bridges follow: Cys148/Cys191, Cys182/Cys224, and Cys282/Cys332. Cys151 is an active-site residue. Cys151 contacts E64. Active-site residues include His288 and Asn308.

The protein belongs to the peptidase C1 family. In terms of tissue distribution, fruit.

It catalyses the reaction Specificity close to that of papain.. Repressed by the active-site-directed cysteine protease inhibitor E64 (L-trans-epoxysuccinyl-leucylamide-(4-guanido)-butane) produced by Aspergillus japonicus. Cysteine protease responsible for the cleavage of kiwellin into kissper and KiTH. This Actinidia chinensis var. chinensis (Chinese soft-hair kiwi) protein is Actinidain.